The sequence spans 291 residues: uncharacterized protein (291 aa).

The segment at methionine 1–histidine 82 is disordered. Composition is skewed to low complexity over residues histidine 28–serine 43 and serine 59–proline 78.

This is an uncharacterized protein from Arabidopsis thaliana (Mouse-ear cress).